We begin with the raw amino-acid sequence, 276 residues long: S-adenosylmethionine-dependent nucleotide dehydratase (276 aa).

The Radical SAM core domain occupies 6 to 216; that stretch reads TSVRKFRSAN…RRRHEDIGCI (211 aa). The [4Fe-4S] cluster site is built by C22, C26, and C29.

It belongs to the radical SAM superfamily. Viperin family. Requires [4Fe-4S] cluster as cofactor.

The enzyme catalyses CTP + AH2 + S-adenosyl-L-methionine = 3'-deoxy-3',4'-didehydro-CTP + 5'-deoxyadenosine + L-methionine + A + H2O + H(+). Functionally, expression of pVip50 in E.coli (strain MG1655) confers resistance to phage P1; has no effect against T7. Catalyzes the conversion of cytosine triphosphate (CTP) to 3'-deoxy-3',4'-didehydro-CTP (ddhCTP), probably via a SAM-dependent radical mechanism. The modified nucleotide represses transcription from T7 RNA polymerase-directed genes (possibly by acting as chain terminators), strongly suggesting these nucleotides block viral polymerase transcription. How this protein allows bacteria to resist viruses that do not encode their own RNA polymerase (such as lambda, P1) is unknown. The polypeptide is S-adenosylmethionine-dependent nucleotide dehydratase (Thermoplasmatales archaeon (strain ISO4-H5)).